A 481-amino-acid polypeptide reads, in one-letter code: Dual specificity protein kinase CLK4 (481 aa).

2 disordered regions span residues 1–46 (MRHS…CKPH) and 102–143 (SKSS…EDDE). Over residues 8-24 (HCPDWDSRESWGHESYR) the composition is skewed to basic and acidic residues. Basic residues-rich tracts occupy residues 25 to 34 (GSHKRKRRSH) and 106 to 136 (VRSRRSSPKRKRNRHCSSHQSRSKSHRRKRS). Ser136 and Ser138 each carry phosphoserine. The Protein kinase domain occupies 159 to 475 (YEIVDTLGEG…LDEALQHPFF (317 aa)). Residues 165–173 (LGEGAFGKV) and Lys189 contribute to the ATP site. Asp286 (proton acceptor) is an active-site residue.

Belongs to the protein kinase superfamily. CMGC Ser/Thr protein kinase family. Lammer subfamily. As to quaternary structure, interacts with UBL5. Autophosphorylates on all three types of residues. Expressed in liver, kidney, heart, muscle, brain and endothelial cells.

Its subcellular location is the nucleus. The catalysed reaction is L-seryl-[protein] + ATP = O-phospho-L-seryl-[protein] + ADP + H(+). It carries out the reaction L-threonyl-[protein] + ATP = O-phospho-L-threonyl-[protein] + ADP + H(+). It catalyses the reaction L-tyrosyl-[protein] + ATP = O-phospho-L-tyrosyl-[protein] + ADP + H(+). With respect to regulation, TG003 inhibits its kinase activity and affects the regulation of alternative splicing mediated by phosphorylation of SR proteins. Its function is as follows. Dual specificity kinase acting on both serine/threonine and tyrosine-containing substrates. Phosphorylates serine- and arginine-rich (SR) proteins of the spliceosomal complex and may be a constituent of a network of regulatory mechanisms that enable SR proteins to control RNA splicing. Phosphorylates SRSF1 and SRSF3. Required for the regulation of alternative splicing of MAPT/TAU. Regulates the alternative splicing of tissue factor (F3) pre-mRNA in endothelial cells. This chain is Dual specificity protein kinase CLK4 (CLK4), found in Homo sapiens (Human).